The chain runs to 819 residues: Advillin (819 aa).

Positions 1–731 are core; that stretch reads MSLSSAFRTV…YEQLKNELGD (731 aa). The stretch at 24–105 is one Gelsolin-like 1 repeat; it reads MELVLVPLSA…VQYHESDTFR (82 aa). Tyrosine 85 is subject to Phosphotyrosine. A 1,2-diacyl-sn-glycero-3-phospho-(1D-myo-inositol-4,5-bisphosphate)-binding positions include 109 to 116 and 135 to 143; these read KRGIIYKK and RLLHVKGKR. Gelsolin-like repeat units follow at residues 144–215, 265–339, 407–486, 524–592, and 631–704; these read NIRA…KEAA, TEVA…SAMF, LVPV…RHFM, NTKA…PEFW, and TEVT…PPTF. The required for interaction with F-actin stretch occupies residues 628-819; it reads FLVTEVTDFT…LQLKKEAGLF (192 aa). Residues 731–819 are headpiece; that stretch reads DATAIVRITT…LQLKKEAGLF (89 aa). An HP domain is found at 753 to 819; it reads ESGPKYYPVE…LQLKKEAGLF (67 aa). Tyrosine 758 is modified (phosphotyrosine).

This sequence belongs to the villin/gelsolin family. As to quaternary structure, associates (via C-terminus) with actin. Interacts with F-actin. Interacts with SCARF1; the interaction occurs in embryonic dorsal root ganglions at 18 dpc and induces neurite-like outgrowth. Interacts with PLCE1. Interacts with ACTR2 and ACTR3; associates with the ARP2/3 complex. In terms of tissue distribution, expressed in dorsal root ganglion (DRG) neurons and superior cervical ganglia (SCG). Expressed in podocytes.

It localises to the cytoplasm. The protein localises to the cytoskeleton. The protein resides in the cell projection. It is found in the neuron projection. Its subcellular location is the axon. It localises to the lamellipodium. The protein localises to the cell junction. The protein resides in the focal adhesion. Functionally, ca(2+)-regulated actin-binding protein which plays an important role in actin bundling. May have a unique function in the morphogenesis of neuronal cells which form ganglia. Required for SREC1-mediated regulation of neurite-like outgrowth. Plays a role in regenerative sensory axon outgrowth and remodeling processes after peripheral injury in neonates. Involved in the formation of long fine actin-containing filopodia-like structures in fibroblast. Plays a role in ciliogenesis. In podocytes, controls lamellipodia formation through the regulation of EGF-induced diacylglycerol generation by PLCE1 and ARP2/3 complex assembly. This Rattus norvegicus (Rat) protein is Advillin.